The following is a 151-amino-acid chain: SsrA-binding protein (151 aa).

It belongs to the SmpB family.

The protein localises to the cytoplasm. Required for rescue of stalled ribosomes mediated by trans-translation. Binds to transfer-messenger RNA (tmRNA), required for stable association of tmRNA with ribosomes. tmRNA and SmpB together mimic tRNA shape, replacing the anticodon stem-loop with SmpB. tmRNA is encoded by the ssrA gene; the 2 termini fold to resemble tRNA(Ala) and it encodes a 'tag peptide', a short internal open reading frame. During trans-translation Ala-aminoacylated tmRNA acts like a tRNA, entering the A-site of stalled ribosomes, displacing the stalled mRNA. The ribosome then switches to translate the ORF on the tmRNA; the nascent peptide is terminated with the 'tag peptide' encoded by the tmRNA and targeted for degradation. The ribosome is freed to recommence translation, which seems to be the essential function of trans-translation. The protein is SsrA-binding protein of Flavobacterium johnsoniae (strain ATCC 17061 / DSM 2064 / JCM 8514 / BCRC 14874 / CCUG 350202 / NBRC 14942 / NCIMB 11054 / UW101) (Cytophaga johnsonae).